Here is an 827-residue protein sequence, read N- to C-terminus: Carnosine synthase 1 (827 aa).

One can recognise an ATP-grasp domain in the interval 516 to 720 (GPPWPAPSLH…LLLAAVMVAC (205 aa)). Position 542-611 (542-611 (VHQVPLPGVM…MEFVEGTEHD (70 aa))) interacts with ATP. Mg(2+)-binding residues include Glu677, Glu689, and Asn691. Mn(2+) contacts are provided by Glu677, Glu689, and Asn691.

As to quaternary structure, homotetramer. Requires Mg(2+) as cofactor. The cofactor is Mn(2+).

It carries out the reaction beta-alanine + L-histidine + ATP = carnosine + ADP + phosphate + H(+). It catalyses the reaction 4-aminobutanoate + L-histidine + ATP = L-homocarnosine + ADP + phosphate + H(+). Catalyzes the synthesis of carnosine and homocarnosine. Carnosine is synthesized more efficiently than homocarnosine. The protein is Carnosine synthase 1 of Homo sapiens (Human).